We begin with the raw amino-acid sequence, 203 residues long: Dual-action ribosomal maturation protein DarP (203 aa).

2 disordered regions span residues 1–31 (MPPM…SKSQ) and 182–203 (GGAS…DDEA). Positions 186–203 (DSDDEAADDAGDDHDDEA) are enriched in acidic residues.

It belongs to the DarP family.

Its subcellular location is the cytoplasm. In terms of biological role, member of a network of 50S ribosomal subunit biogenesis factors which assembles along the 30S-50S interface, preventing incorrect 23S rRNA structures from forming. Promotes peptidyl transferase center (PTC) maturation. This is Dual-action ribosomal maturation protein DarP from Burkholderia cenocepacia (strain HI2424).